We begin with the raw amino-acid sequence, 96 residues long: Early E1A 11 kDa protein (96 aa).

Disordered stretches follow at residues 1 to 29 (MNSR…QDQQ) and 72 to 96 (LAQG…EESD). The span at 75–96 (GEEEEEEEDGAEDIEENGEESD) shows a compositional bias: acidic residues.

The sequence is that of Early E1A 11 kDa protein from Murine adenovirus A serotype 1 (MAdV-1).